The chain runs to 282 residues: Transcription factor MYB1 (282 aa).

HTH myb-type domains follow at residues 9-61 and 62-116; these read KEGL…LNYL and RPDI…SKKV. 2 DNA-binding regions (H-T-H motif) span residues 37-61 and 89-112; these read WRDL…LNYL and WSLI…NTYL. The interval 258–282 is disordered; sequence EDDWKQNGGKDELMGGGNGGPSSVS. The span at 260–270 shows a compositional bias: basic and acidic residues; sequence DWKQNGGKDEL. The span at 271–282 shows a compositional bias: gly residues; it reads MGGGNGGPSSVS.

The protein resides in the nucleus. Its function is as follows. Transcription activator involved in the spatiotemporal regulation of flavonoid biosynthesis specifically in the corms of Montbretia. Activates the promoters of enzymes involved in the biosynthesis of the flavonol kaempferol and the flavonol-glycoside kaempferol-rhamnoside. This is Transcription factor MYB1 from Crocosmia x crocosmiiflora (Montbretia).